The sequence spans 508 residues: Probable cytosol aminopeptidase (508 aa).

2 residues coordinate Mn(2+): Lys-274 and Asp-279. Lys-286 is an active-site residue. Mn(2+)-binding residues include Asp-297, Asp-356, and Glu-358. Arg-360 is a catalytic residue.

The protein belongs to the peptidase M17 family. The cofactor is Mn(2+).

The protein localises to the cytoplasm. The enzyme catalyses Release of an N-terminal amino acid, Xaa-|-Yaa-, in which Xaa is preferably Leu, but may be other amino acids including Pro although not Arg or Lys, and Yaa may be Pro. Amino acid amides and methyl esters are also readily hydrolyzed, but rates on arylamides are exceedingly low.. It carries out the reaction Release of an N-terminal amino acid, preferentially leucine, but not glutamic or aspartic acids.. Presumably involved in the processing and regular turnover of intracellular proteins. Catalyzes the removal of unsubstituted N-terminal amino acids from various peptides. The polypeptide is Probable cytosol aminopeptidase (Paraburkholderia xenovorans (strain LB400)).